Reading from the N-terminus, the 241-residue chain is 2-heptyl-1-hydroxyquinolin-4(1H)-one methyltransferase (241 aa).

The protein belongs to the methyltransferase superfamily. In terms of assembly, monomer.

It localises to the cytoplasm. The enzyme catalyses 2-heptyl-1-hydroxy-4(1H)-quinolinone + S-adenosyl-L-methionine = 2-heptyl-1-methoxy-4(1H)-quinolinone + S-adenosyl-L-homocysteine + H(+). In terms of biological role, involved in cellular response to chemical stress and may contribute to resistance toward antimicrobial natural compounds as well as drugs. Catalyzes the methylation and detoxification of the P.aeruginosa toxin 2-heptyl-1-hydroxy-4(1H)-quinolinone (HQNO) to 2-heptyl-1-methoxy-4(1H)-quinolinone (HMOQ). The chain is 2-heptyl-1-hydroxyquinolin-4(1H)-one methyltransferase from Mycobacterium bovis (strain BCG / Pasteur 1173P2).